Here is a 545-residue protein sequence, read N- to C-terminus: MTTNYIFVTGGVVSSLGKGIAAASLAAILEARGLNVTMMKLDPYINVDPGTMSPIQHGEVFVTEDGAETDLDLGHYERFIRTKMSRRNNFTTGRIYSDVLRKERRGDYLGATVQVIPHITNAIKERIVAGGEGHDVVLVEIGGTVGDIESLPFLEAIRQLAVDIGREHALFMHLTLVPYMAAAGEVKTKPTQHSVKELLSIGIQPDILICRSDRAVPANERAKIALFCNVAEKAVISLKDVDSIYKIPGLLKSQGLDDYICKRFSLNVPEANLSEWEQVIYEEANPAGEVTIGMVGKYIELPDAYKSVIEALKHGGLKNRVTVNIKLIDSQDVETRGVEILKDLDAILIPGGFGYRGVEGKIATARFARENNIPYLGICLGMQVALIEFARNVVGMENANSTEFVPDCKYPVVALITEWRDEDGNVEVRTEKSDLGGTMRLGAQACQVSEDSLVRKMYGSTTITERHRHRYEVNNMLLKQIEAAGLRIAGRSGDDQLVEIIEVPNHPWFVACQFHPEFTSTPRDGHPLFAGFVKAASEYQKRQAK.

Residues 1–266 form an amidoligase domain region; the sequence is MTTNYIFVTG…DDYICKRFSL (266 aa). Position 14 (S14) interacts with CTP. Position 14 (S14) interacts with UTP. ATP is bound by residues 15-20 and D72; that span reads SLGKGI. Positions 72 and 140 each coordinate Mg(2+). CTP is bound by residues 147–149, 187–192, and K223; these read DIE and KTKPTQ. UTP contacts are provided by residues 187-192 and K223; that span reads KTKPTQ. 239 to 241 contacts ATP; that stretch reads KDV. In terms of domain architecture, Glutamine amidotransferase type-1 spans 291–542; it reads TIGMVGKYIE…VKAASEYQKR (252 aa). Residue G352 participates in L-glutamine binding. C379 functions as the Nucleophile; for glutamine hydrolysis in the catalytic mechanism. Residues 380–383, E403, and R470 contribute to the L-glutamine site; that span reads LGMQ. Active-site residues include H515 and E517.

Belongs to the CTP synthase family. Homotetramer.

The enzyme catalyses UTP + L-glutamine + ATP + H2O = CTP + L-glutamate + ADP + phosphate + 2 H(+). The catalysed reaction is L-glutamine + H2O = L-glutamate + NH4(+). It carries out the reaction UTP + NH4(+) + ATP = CTP + ADP + phosphate + 2 H(+). Its pathway is pyrimidine metabolism; CTP biosynthesis via de novo pathway; CTP from UDP: step 2/2. Its activity is regulated as follows. Allosterically activated by GTP, when glutamine is the substrate; GTP has no effect on the reaction when ammonia is the substrate. The allosteric effector GTP functions by stabilizing the protein conformation that binds the tetrahedral intermediate(s) formed during glutamine hydrolysis. Inhibited by the product CTP, via allosteric rather than competitive inhibition. Its function is as follows. Catalyzes the ATP-dependent amination of UTP to CTP with either L-glutamine or ammonia as the source of nitrogen. Regulates intracellular CTP levels through interactions with the four ribonucleotide triphosphates. This chain is CTP synthase, found in Enterobacter sp. (strain 638).